The chain runs to 119 residues: Ribonuclease P protein component (119 aa).

Belongs to the RnpA family. As to quaternary structure, consists of a catalytic RNA component (M1 or rnpB) and a protein subunit.

The enzyme catalyses Endonucleolytic cleavage of RNA, removing 5'-extranucleotides from tRNA precursor.. In terms of biological role, RNaseP catalyzes the removal of the 5'-leader sequence from pre-tRNA to produce the mature 5'-terminus. It can also cleave other RNA substrates such as 4.5S RNA. The protein component plays an auxiliary but essential role in vivo by binding to the 5'-leader sequence and broadening the substrate specificity of the ribozyme. The polypeptide is Ribonuclease P protein component (Listeria monocytogenes serotype 4a (strain HCC23)).